We begin with the raw amino-acid sequence, 145 residues long: MRSEKHLPPLPLLLAICCLGTLHPSSGFPQSVPSYMEALDIPESEKLAFCFSQWTALPDQEQIPSFVMDLCSSIYNRMKVNEENNHEIYKRFLFQFSRTKDPSLKTGESQIATAEYTKRDSSGIVGRPFFLFRPRNGRKVSINEH.

An N-terminal signal peptide occupies residues Met-1–Gly-27. Propeptides lie at residues Phe-28 to Tyr-89 and Phe-92 to Thr-117. Asn-136 bears the Asparagine amide mark. A propeptide spanning residues Val-140 to His-145 is cleaved from the precursor.

Belongs to the NmU family. Expressed by the skin glands.

The protein localises to the secreted. In terms of biological role, stimulates uterine smooth muscle contraction. Synthetic peptide NmS-17 induces calcium mobilization in CHO cells transfected with either human FM-3/GPR66 (EC(50)=0.085 nM) or FM-4/TGR-1 (EC(50)=0.231 nM) NmU/NmS receptors. In Bombina orientalis (Oriental fire-bellied toad), this protein is Neuromedin-S (nms).